Reading from the N-terminus, the 658-residue chain is Pentatricopeptide repeat-containing protein At1g69290 (658 aa).

Disordered stretches follow at residues 1–23 (MFRK…ESPS) and 39–61 (TLSP…KSSF). The span at 50-61 (PKTLTPDQKSSF) shows a compositional bias: polar residues. PPR repeat units follow at residues 214 to 249 (DLVA…GVKP), 250 to 284 (DELS…GFAS), 285 to 320 (RRIL…GEES), 323 to 353 (SVET…AQKL), 361 to 395 (DSSV…GGGS), 397 to 431 (GIGV…GLQL), 432 to 466 (DVEI…RVVD), 467 to 497 (LKGS…VVED), 503 to 537 (NSHD…RYEP), 538 to 568 (NNQT…IKGK), and 581 to 615 (DHAL…KIFV).

The protein belongs to the PPR family. P subfamily.

The protein is Pentatricopeptide repeat-containing protein At1g69290 of Arabidopsis thaliana (Mouse-ear cress).